Consider the following 428-residue polypeptide: Enolase (428 aa).

Residue glutamine 163 coordinates (2R)-2-phosphoglycerate. Glutamate 205 functions as the Proton donor in the catalytic mechanism. Positions 242, 286, and 313 each coordinate Mg(2+). The (2R)-2-phosphoglycerate site is built by lysine 338, arginine 367, serine 368, and lysine 389. The active-site Proton acceptor is lysine 338.

Belongs to the enolase family. Mg(2+) serves as cofactor.

Its subcellular location is the cytoplasm. It is found in the secreted. The protein resides in the cell surface. It carries out the reaction (2R)-2-phosphoglycerate = phosphoenolpyruvate + H2O. Its pathway is carbohydrate degradation; glycolysis; pyruvate from D-glyceraldehyde 3-phosphate: step 4/5. Functionally, catalyzes the reversible conversion of 2-phosphoglycerate (2-PG) into phosphoenolpyruvate (PEP). It is essential for the degradation of carbohydrates via glycolysis. This chain is Enolase, found in Lactobacillus acidophilus (strain ATCC 700396 / NCK56 / N2 / NCFM).